The primary structure comprises 81 residues: UPF0386 protein Smed_0945 (81 aa).

This sequence belongs to the UPF0386 family.

The protein is UPF0386 protein Smed_0945 of Sinorhizobium medicae (strain WSM419) (Ensifer medicae).